A 185-amino-acid chain; its full sequence is Elongation factor P (185 aa).

This sequence belongs to the elongation factor P family.

Its subcellular location is the cytoplasm. It functions in the pathway protein biosynthesis; polypeptide chain elongation. Functionally, involved in peptide bond synthesis. Stimulates efficient translation and peptide-bond synthesis on native or reconstituted 70S ribosomes in vitro. Probably functions indirectly by altering the affinity of the ribosome for aminoacyl-tRNA, thus increasing their reactivity as acceptors for peptidyl transferase. The protein is Elongation factor P of Tropheryma whipplei (strain TW08/27) (Whipple's bacillus).